The sequence spans 207 residues: 3-demethoxyubiquinol 3-hydroxylase (207 aa).

Residues glutamate 56, glutamate 86, histidine 89, glutamate 138, glutamate 170, and histidine 173 each contribute to the Fe cation site.

The protein belongs to the COQ7 family. The cofactor is Fe cation.

It localises to the cell membrane. It catalyses the reaction a 5-methoxy-2-methyl-3-(all-trans-polyprenyl)benzene-1,4-diol + AH2 + O2 = a 3-demethylubiquinol + A + H2O. It functions in the pathway cofactor biosynthesis; ubiquinone biosynthesis. Catalyzes the hydroxylation of 2-nonaprenyl-3-methyl-6-methoxy-1,4-benzoquinol during ubiquinone biosynthesis. The sequence is that of 3-demethoxyubiquinol 3-hydroxylase from Cupriavidus necator (strain ATCC 17699 / DSM 428 / KCTC 22496 / NCIMB 10442 / H16 / Stanier 337) (Ralstonia eutropha).